Consider the following 477-residue polypeptide: MNLSIQEELQPFVEELQRYITPEFLEELAREMKFVKRKRKFSGSDLATICIWISQRVASDPLVRLCSRLHAVTGTVLSPEGLNKRFNEKSVLFLKHVFSLLLQQKICEQTYISNQLLSHFKRIRIMDATMFQVPHTLEHIYPGSGGCAQTAGIKIQLEYDLHSGQFFNFQVGPGKNNDKTFGTECLDTLRPGDLCIRDLGYFSLEDLDQMDQRGTYYISRLKLNTNVYVKNPSPEYFKNGAIKKQSEYIQINVIQILNQLQPGETIEYQQAYIGDKQQLFSRLVFHRLTAAQLQKRLKKIAEKEKSKHRTYSEKSKLVAGLNVYVTNAPWEWVPMEQVHELYTLRWQIEIVFKTWKSLFDIDHCRTVKQERIECHLYGKLIAIFLCSSTMFKMRQLLLQKKKKELSEYKAIGMIQDHLFLLYQSIQNTQEITKLLTRLFHLLQQNGRKSHRYEKKTVFDIMGVIYEYSGCSKQKKAA.

Belongs to the transposase 11 family.

Involved in the transposition of the insertion sequence. The protein is Transposase for insertion sequence element IS231F of Bacillus thuringiensis subsp. israelensis.